Consider the following 354-residue polypeptide: Mycothiol acetyltransferase (354 aa).

Residues 1 to 18 show a composition bias toward polar residues; that stretch reads MMVDNQTPDSSTLSTAST. A disordered region spans residues 1-21; it reads MMVDNQTPDSSTLSTASTPVY. 2 consecutive N-acetyltransferase domains span residues 21–176 and 191–354; these read YAEP…QTRE and LRMR…EPAA. E52 is a binding site for 1D-myo-inositol 2-(L-cysteinylamino)-2-deoxy-alpha-D-glucopyranoside. Position 101–103 (101–103) interacts with acetyl-CoA; it reads AAV. 1D-myo-inositol 2-(L-cysteinylamino)-2-deoxy-alpha-D-glucopyranoside contacts are provided by E217, K259, and E274. Residues 278 to 280 and 285 to 291 each bind acetyl-CoA; these read VGV and QGGGLGR. Y318 is a binding site for 1D-myo-inositol 2-(L-cysteinylamino)-2-deoxy-alpha-D-glucopyranoside.

This sequence belongs to the acetyltransferase family. MshD subfamily. In terms of assembly, monomer.

The enzyme catalyses 1D-myo-inositol 2-(L-cysteinylamino)-2-deoxy-alpha-D-glucopyranoside + acetyl-CoA = mycothiol + CoA + H(+). Functionally, catalyzes the transfer of acetyl from acetyl-CoA to desacetylmycothiol (Cys-GlcN-Ins) to form mycothiol. This is Mycothiol acetyltransferase from Rothia mucilaginosa (strain DY-18) (Stomatococcus mucilaginosus).